The following is a 77-amino-acid chain: UPF0213 protein VNG_2274C (77 aa).

Positions 1 to 75 (MHHVYVIECS…KQLSRAQKEA (75 aa)) constitute a GIY-YIG domain.

Belongs to the UPF0213 family.

The polypeptide is UPF0213 protein VNG_2274C (Halobacterium salinarum (strain ATCC 700922 / JCM 11081 / NRC-1) (Halobacterium halobium)).